A 798-amino-acid polypeptide reads, in one-letter code: Tripartite terminase subunit 1 (798 aa).

The C3H1-type zinc-finger motif lies at 191–219 (CFQCYEELMAVPNQGRSINRRMQGLLCDH). The segment covering 416-429 (AAGAARSRAEAASG) has biased composition (low complexity). The interval 416–458 (AAGAARSRAEAASGAGAGGEEGAGAAAGRGNTGGDEGAGTTTA) is disordered. The span at 430–452 (AGAGGEEGAGAAAGRGNTGGDEG) shows a compositional bias: gly residues. 674–681 (YNETFGKQ) provides a ligand contact to ATP.

This sequence belongs to the herpesviridae TRM1 protein family. As to quaternary structure, associates with TRM2 and TRM3 to form the tripartite terminase complex. Interacts with portal protein.

It localises to the host nucleus. Component of the molecular motor that translocates viral genomic DNA in empty capsid during DNA packaging. Forms a tripartite terminase complex together with TRM2 and TRM3 in the host cytoplasm. Once the complex reaches the host nucleus, it interacts with the capsid portal vertex. This portal forms a ring in which genomic DNA is translocated into the capsid. TRM1 carries an endonuclease activity that plays an important role for the cleavage of concatemeric viral DNA into unit length genomes. The chain is Tripartite terminase subunit 1 from Murid herpesvirus 1 (strain Smith) (MuHV-1).